Consider the following 310-residue polypeptide: Homoserine kinase (310 aa).

Position 91–101 (91–101 (PIGSGLGSSAC)) interacts with ATP.

Belongs to the GHMP kinase family. Homoserine kinase subfamily.

The protein localises to the cytoplasm. The catalysed reaction is L-homoserine + ATP = O-phospho-L-homoserine + ADP + H(+). The protein operates within amino-acid biosynthesis; L-threonine biosynthesis; L-threonine from L-aspartate: step 4/5. Its function is as follows. Catalyzes the ATP-dependent phosphorylation of L-homoserine to L-homoserine phosphate. This is Homoserine kinase from Sodalis glossinidius (strain morsitans).